A 67-amino-acid chain; its full sequence is DNA-directed RNA polymerase subunit omega (67 aa).

It belongs to the RNA polymerase subunit omega family. The RNAP catalytic core consists of 2 alpha, 1 beta, 1 beta' and 1 omega subunit. When a sigma factor is associated with the core the holoenzyme is formed, which can initiate transcription.

It catalyses the reaction RNA(n) + a ribonucleoside 5'-triphosphate = RNA(n+1) + diphosphate. Functionally, promotes RNA polymerase assembly. Latches the N- and C-terminal regions of the beta' subunit thereby facilitating its interaction with the beta and alpha subunits. This Acidovorax ebreus (strain TPSY) (Diaphorobacter sp. (strain TPSY)) protein is DNA-directed RNA polymerase subunit omega.